We begin with the raw amino-acid sequence, 415 residues long: 3-isopropylmalate dehydratase large subunit (415 aa).

Positions 297, 355, and 358 each coordinate [4Fe-4S] cluster.

It belongs to the aconitase/IPM isomerase family. LeuC type 2 subfamily. In terms of assembly, heterodimer of LeuC and LeuD. It depends on [4Fe-4S] cluster as a cofactor.

It catalyses the reaction (2R,3S)-3-isopropylmalate = (2S)-2-isopropylmalate. It functions in the pathway amino-acid biosynthesis; L-leucine biosynthesis; L-leucine from 3-methyl-2-oxobutanoate: step 2/4. Functionally, catalyzes the isomerization between 2-isopropylmalate and 3-isopropylmalate, via the formation of 2-isopropylmaleate. The polypeptide is 3-isopropylmalate dehydratase large subunit (Metallosphaera sedula (strain ATCC 51363 / DSM 5348 / JCM 9185 / NBRC 15509 / TH2)).